The chain runs to 562 residues: Oxygen-dependent choline dehydrogenase (562 aa).

4 to 33 (DYIIIGAGSAGNVLATRLTEDPNTTVLLLE) is a binding site for FAD. His473 serves as the catalytic Proton acceptor.

The protein belongs to the GMC oxidoreductase family. FAD serves as cofactor.

It catalyses the reaction choline + A = betaine aldehyde + AH2. The enzyme catalyses betaine aldehyde + NAD(+) + H2O = glycine betaine + NADH + 2 H(+). It participates in amine and polyamine biosynthesis; betaine biosynthesis via choline pathway; betaine aldehyde from choline (cytochrome c reductase route): step 1/1. Functionally, involved in the biosynthesis of the osmoprotectant glycine betaine. Catalyzes the oxidation of choline to betaine aldehyde and betaine aldehyde to glycine betaine at the same rate. This is Oxygen-dependent choline dehydrogenase from Escherichia coli (strain SMS-3-5 / SECEC).